Here is a 453-residue protein sequence, read N- to C-terminus: UDP-N-acetylmuramoylalanine--D-glutamate ligase (453 aa).

ATP is bound at residue 115–121 (GSNGKTT).

The protein belongs to the MurCDEF family.

Its subcellular location is the cytoplasm. The enzyme catalyses UDP-N-acetyl-alpha-D-muramoyl-L-alanine + D-glutamate + ATP = UDP-N-acetyl-alpha-D-muramoyl-L-alanyl-D-glutamate + ADP + phosphate + H(+). The protein operates within cell wall biogenesis; peptidoglycan biosynthesis. Its function is as follows. Cell wall formation. Catalyzes the addition of glutamate to the nucleotide precursor UDP-N-acetylmuramoyl-L-alanine (UMA). In Koribacter versatilis (strain Ellin345), this protein is UDP-N-acetylmuramoylalanine--D-glutamate ligase.